Consider the following 202-residue polypeptide: Na(+)-translocating NADH-quinone reductase subunit E (202 aa).

The next 6 membrane-spanning stretches (helical) occupy residues Val5 to Met25, Val35 to Leu55, Phe81 to Phe101, Gly114 to Val134, Leu144 to Ile164, and Leu180 to Met200.

It belongs to the NqrDE/RnfAE family. As to quaternary structure, composed of six subunits; NqrA, NqrB, NqrC, NqrD, NqrE and NqrF.

It localises to the cell inner membrane. It carries out the reaction a ubiquinone + n Na(+)(in) + NADH + H(+) = a ubiquinol + n Na(+)(out) + NAD(+). Its function is as follows. NQR complex catalyzes the reduction of ubiquinone-1 to ubiquinol by two successive reactions, coupled with the transport of Na(+) ions from the cytoplasm to the periplasm. NqrA to NqrE are probably involved in the second step, the conversion of ubisemiquinone to ubiquinol. The protein is Na(+)-translocating NADH-quinone reductase subunit E of Psychrobacter sp. (strain PRwf-1).